The chain runs to 351 residues: Peptide chain release factor 1 (351 aa).

Q229 is modified (N5-methylglutamine).

It belongs to the prokaryotic/mitochondrial release factor family. In terms of processing, methylated by PrmC. Methylation increases the termination efficiency of RF1.

It localises to the cytoplasm. Functionally, peptide chain release factor 1 directs the termination of translation in response to the peptide chain termination codons UAG and UAA. The polypeptide is Peptide chain release factor 1 (Cereibacter sphaeroides (strain ATCC 17029 / ATH 2.4.9) (Rhodobacter sphaeroides)).